Here is a 647-residue protein sequence, read N- to C-terminus: Beta-galactosidase (647 aa).

Positions 1–24 (MLRVPLCTPLPLLALLQLLGAAHG) are cleaved as a signal peptide. Positions 25 to 29 (IYNVT) are excised as a propeptide. N-linked (GlcNAc...) asparagine glycosylation occurs at asparagine 27. The substrate site is built by tyrosine 84, glutamate 130, and asparagine 188. The active-site Proton donor is glutamate 189. A disulfide bond links cysteine 196 and cysteine 231. Residue asparagine 248 is glycosylated (N-linked (GlcNAc...) asparagine). Catalysis depends on glutamate 269, which acts as the Nucleophile. Tyrosine 334 serves as a coordination point for substrate. N-linked (GlcNAc...) asparagine glycans are attached at residues asparagine 500, asparagine 504, asparagine 510, asparagine 544, asparagine 557, and asparagine 617. Cysteine 628 and cysteine 636 are joined by a disulfide.

This sequence belongs to the glycosyl hydrolase 35 family. As to quaternary structure, homodimer. May form higher multimers.

It localises to the lysosome. It carries out the reaction Hydrolysis of terminal non-reducing beta-D-galactose residues in beta-D-galactosides.. Cleaves beta-linked terminal galactosyl residues from gangliosides, glycoproteins, and glycosaminoglycans. The protein is Beta-galactosidase (Glb1) of Mus musculus (Mouse).